The sequence spans 201 residues: Recombination protein RecR (201 aa).

A C4-type zinc finger spans residues cysteine 57–cysteine 72. One can recognise a Toprim domain in the interval glycine 81 to proline 176.

This sequence belongs to the RecR family.

In terms of biological role, may play a role in DNA repair. It seems to be involved in an RecBC-independent recombinational process of DNA repair. It may act with RecF and RecO. This Shigella boydii serotype 4 (strain Sb227) protein is Recombination protein RecR.